Consider the following 595-residue polypeptide: NAD-dependent protein deacetylase hst4 (595 aa).

Residues 1–106 (MAPRKTKPAT…HLDLTPRLGF (106 aa)) form a disordered region. Low complexity predominate over residues 9–32 (ATKPAAKPTPASTATTSSCPSPKS). Residues 109-428 (YGDQEPQLNL…SADVERVKNE (320 aa)) enclose the Deacetylase sirtuin-type domain. NAD(+) contacts are provided by residues 134-153 (GAGI…DGLF) and 222-225 (QNID). His-253 serves as the catalytic Proton acceptor. Zn(2+) contacts are provided by Cys-261, Cys-264, Cys-283, and Cys-286. NAD(+)-binding positions include 342–344 (GTS), 373–375 (NNE), and Cys-394. Positions 445-473 (QAQTGMLTPSSSYDGDVENASTTTLSNPA) are enriched in polar residues. Residues 445 to 595 (QAQTGMLTPS…IPKGMGKLLD (151 aa)) are disordered. 2 stretches are compositionally biased toward basic and acidic residues: residues 478 to 492 (KLTE…DAPK) and 530 to 543 (TPEE…EHKA).

The protein belongs to the sirtuin family. Class I subfamily. Zn(2+) is required as a cofactor.

The protein localises to the nucleus. It carries out the reaction N(6)-acetyl-L-lysyl-[protein] + NAD(+) + H2O = 2''-O-acetyl-ADP-D-ribose + nicotinamide + L-lysyl-[protein]. In terms of biological role, NAD-dependent histone deacetylase, which could function in telomeric silencing, cell cycle progression and chromosome stability. In Emericella nidulans (strain FGSC A4 / ATCC 38163 / CBS 112.46 / NRRL 194 / M139) (Aspergillus nidulans), this protein is NAD-dependent protein deacetylase hst4.